The sequence spans 139 residues: MIIGIGSDLIDIRRVAEVIERHGDRFLNRIFTEAERAKAERRAKNEKMVVATYAKRFAAKEACSKALGTGIRHGVWWRDMGVVNLPGGRPTMQLTGGAAERLKALTPAGHDARIDLSITDDWPLAQAFVIISAVSLATS.

Mg(2+)-binding residues include aspartate 8 and glutamate 61.

The protein belongs to the P-Pant transferase superfamily. AcpS family. The cofactor is Mg(2+).

It is found in the cytoplasm. The catalysed reaction is apo-[ACP] + CoA = holo-[ACP] + adenosine 3',5'-bisphosphate + H(+). Functionally, transfers the 4'-phosphopantetheine moiety from coenzyme A to a Ser of acyl-carrier-protein. The polypeptide is Holo-[acyl-carrier-protein] synthase (Bradyrhizobium sp. (strain BTAi1 / ATCC BAA-1182)).